The following is a 309-amino-acid chain: Low-density lipoprotein receptor-related protein 1 (309 aa).

It belongs to the LDLR family.

It localises to the endoplasmic reticulum. It is found in the golgi apparatus. Its subcellular location is the endosome. Its function is as follows. Involved in endocytosis, fatty acid beta-oxidation and infectious growth. Plays a critical role in the accumulation of MSN2 from the cytosol to the nucleus by activating the cyclic AMP signaling pathway. MSN2 can then target the dienoyl-coenzyme A isomerase DCI1 and other genes involved in fatty acid beta-oxidation, which is important for lipid droplets degradation and infectious growth. This chain is Low-density lipoprotein receptor-related protein 1, found in Pyricularia oryzae (strain 70-15 / ATCC MYA-4617 / FGSC 8958) (Rice blast fungus).